A 732-amino-acid chain; its full sequence is Aldehyde oxidoreductase molybdenum-binding subunit PaoC (732 aa).

Mo-molybdopterin cytosine dinucleotide-binding positions include 241–242 (GF), 468–470 (IGT), 511–512 (GA), 615–621 (RILNPKT), Gln-625, and 688–691 (KGVG). Glu-692 acts as the Proton acceptor in catalysis.

It belongs to the xanthine dehydrogenase family. In terms of assembly, heterotrimer composed of PaoA, PaoB and PaoC. It depends on Mo-molybdopterin cytosine dinucleotide as a cofactor.

It localises to the periplasm. It catalyses the reaction an aldehyde + A + H2O = a carboxylate + AH2 + H(+). Oxidizes aldehydes to the corresponding carboxylic acids with a preference for aromatic aldehydes. It might play a role in the detoxification of aldehydes to avoid cell damage. This chain is Aldehyde oxidoreductase molybdenum-binding subunit PaoC, found in Escherichia coli O157:H7.